The primary structure comprises 639 residues: Methyl-accepting chemotaxis protein McpS (639 aa).

Residues 1-13 (MNSWFANISVNLK) lie on the Cytoplasmic side of the membrane. Residues 14 to 34 (LGLGFGLVLVLTGLLALTGWT) form a helical membrane-spanning segment. The Periplasmic portion of the chain corresponds to 35–288 (SLGSLIDRSN…RDIESTQARS (254 aa)). Positions 41 to 283 (DRSNWMGDIG…IQLERRDIES (243 aa)) constitute an HBM domain. A (S)-malate-binding site is contributed by 60 to 65 (RIARLQ). 60-65 (RIARLQ) is a binding site for succinate. Acetate is bound by residues Asp138, Arg183, Arg187, and Tyr236. The stretch at 191-245 (AENSSANEQAALRQLDAALADTDNLKRQLPSEDARLQQFENAVLAYRDAVRQFRD) forms a coiled coil. Arg254 and Thr258 together coordinate (S)-malate. Arg254 serves as a coordination point for succinate. The helical transmembrane segment at 289 to 309 (LQAIATLLALLVGVLAAVLIT) threads the bilayer. Residues 310 to 362 (RQITRPLQDTLVAVEKIASGDLTQHMRVTRRDELGVLQQGIARMGTTLRELIS) form the HAMP domain. The Cytoplasmic segment spans residues 310–639 (RQITRPLQDT…LQTLVSQFRV (330 aa)). Residues 367–603 (GVTQIASAAE…EISRSILNVR (237 aa)) form the Methyl-accepting transducer domain.

Belongs to the methyl-accepting chemotaxis (MCP) protein family. Homodimer. Exists as a mixture of monomers and dimers in solution. Ligand binding stabilizes the dimeric form. In terms of processing, methylated by CheR2.

The protein resides in the cell membrane. Its activity is regulated as follows. Binding of citrate to the ligand-binding domain reduces the chemotaxis towards the strong attractants such as malate and succinate. However, in physiologically relevant niches, citrate is mostly complexed with magnesium or calcium ions, and does not bind McpS. Its function is as follows. Chemotactic-signal transducers respond to changes in the concentration of attractants and repellents in the environment, transduce a signal from the outside to the inside of the cell, and facilitate sensory adaptation through the variation of the level of methylation. McpS is a specific chemoreceptor for 6 tricarboxylic acid (TCA) cycle intermediates (succinate, fumarate, malate, oxaloacetate, citrate and isocitrate), butyrate and acetate. Malate, succinate, fumarate and oxaloacetate cause the strongest chemotactic response. In Pseudomonas putida (strain ATCC 47054 / DSM 6125 / CFBP 8728 / NCIMB 11950 / KT2440), this protein is Methyl-accepting chemotaxis protein McpS (mcpS).